The following is a 205-amino-acid chain: MARGPRYKVPFRRRREGLTNYRKRRRLILSRKPRLVVRKTNKHIIAQVVVAKPQGDVTIVGVDTRALAKFGWRGDENNTSAAYLLGLVAGYKARLRGVREAVLDIGLHRPVAGSRVFAVLKGALDAGLEIPHGEEVLPEDDRVSGKHVAEYAAKLKEENPELYKARFSRYLQRGVQPEDLPKHFEEVKKKIVEHYEAKLAKAVAQ.

This sequence belongs to the universal ribosomal protein uL18 family. As to quaternary structure, part of the 50S ribosomal subunit. Contacts the 5S and 23S rRNAs.

This is one of the proteins that bind and probably mediate the attachment of the 5S RNA into the large ribosomal subunit, where it forms part of the central protuberance. The polypeptide is Large ribosomal subunit protein uL18 (Pyrobaculum neutrophilum (strain DSM 2338 / JCM 9278 / NBRC 100436 / V24Sta) (Thermoproteus neutrophilus)).